The sequence spans 21 residues: Dahlein-5.6 (21 aa).

In terms of tissue distribution, expressed by the skin dorsal glands.

It localises to the secreted. Functionally, has no antimicrobial activity. Strongly inhibits the formation of NO by neuronal nitric oxide synthase at micromolar concentrations. The protein is Dahlein-5.6 of Ranoidea dahlii (Dahl's aquatic frog).